A 115-amino-acid chain; its full sequence is Putative HNH nuclease YajD (115 aa).

The HNH domain maps to 27 to 75 (CGRCSREFVYSNLRELTVHHIDHDHTNNPEDGSNWELLCLYCHDHEHSK).

Belongs to the HNH nuclease family.

This chain is Putative HNH nuclease YajD (yajD), found in Escherichia coli O157:H7.